The chain runs to 100 residues: Urease subunit gamma (100 aa).

Belongs to the urease gamma subunit family. In terms of assembly, heterotrimer of UreA (gamma), UreB (beta) and UreC (alpha) subunits. Three heterotrimers associate to form the active enzyme.

The protein resides in the cytoplasm. The catalysed reaction is urea + 2 H2O + H(+) = hydrogencarbonate + 2 NH4(+). It functions in the pathway nitrogen metabolism; urea degradation; CO(2) and NH(3) from urea (urease route): step 1/1. In Variovorax paradoxus (strain S110), this protein is Urease subunit gamma.